The primary structure comprises 190 residues: Early nodulin-like protein 12 (190 aa).

The first 21 residues, 1–21 (MGIIVPVLTLVFLLFAKVSHG), serve as a signal peptide directing secretion. The 105-residue stretch at 26–130 (RVILVGGSVG…GEKITLVVLA (105 aa)) folds into the Phytocyanin domain. N-linked (GlcNAc...) asparagine glycosylation occurs at N44. A disulfide bridge connects residues C84 and C118. The segment at 135–164 (GGGSSSGDAPKVSPVSPTAQTPAPAPGPAA) is disordered. Residues 151-164 (PTAQTPAPAPGPAA) show a composition bias toward low complexity. N167 is lipidated: GPI-anchor amidated asparagine. The propeptide at 168–190 (AAVGLKVASGWFLTAVVVGLAMA) is removed in mature form.

This sequence belongs to the early nodulin-like (ENODL) family. Confined to flowers and siliques. Expressed in female gametophytes.

It is found in the cell membrane. Functionally, may act as a carbohydrate transporter. Required, together with ENODL11, ENODL12, ENODL13, ENODL14 and ENODL15, for male-female communication and pollen tube reception and burst at the synergid cell surface of the female gametophyte. In Arabidopsis thaliana (Mouse-ear cress), this protein is Early nodulin-like protein 12.